The primary structure comprises 314 residues: Methionyl-tRNA formyltransferase (314 aa).

108 to 111 (SLLP) lines the (6S)-5,6,7,8-tetrahydrofolate pocket.

The protein belongs to the Fmt family.

The enzyme catalyses L-methionyl-tRNA(fMet) + (6R)-10-formyltetrahydrofolate = N-formyl-L-methionyl-tRNA(fMet) + (6S)-5,6,7,8-tetrahydrofolate + H(+). Functionally, attaches a formyl group to the free amino group of methionyl-tRNA(fMet). The formyl group appears to play a dual role in the initiator identity of N-formylmethionyl-tRNA by promoting its recognition by IF2 and preventing the misappropriation of this tRNA by the elongation apparatus. The protein is Methionyl-tRNA formyltransferase of Akkermansia muciniphila (strain ATCC BAA-835 / DSM 22959 / JCM 33894 / BCRC 81048 / CCUG 64013 / CIP 107961 / Muc).